Here is a 431-residue protein sequence, read N- to C-terminus: 3-phosphoshikimate 1-carboxyvinyltransferase (431 aa).

The 3-phosphoshikimate site is built by Lys-21, Ser-22, and Arg-26. A phosphoenolpyruvate-binding site is contributed by Lys-21. Phosphoenolpyruvate contacts are provided by Gly-94 and Arg-122. Residues Ser-167, Gln-169, Asp-315, and Lys-342 each contribute to the 3-phosphoshikimate site. Gln-169 provides a ligand contact to phosphoenolpyruvate. Asp-315 serves as the catalytic Proton acceptor. Phosphoenolpyruvate contacts are provided by Arg-346 and Arg-388.

This sequence belongs to the EPSP synthase family. Monomer.

Its subcellular location is the cytoplasm. The catalysed reaction is 3-phosphoshikimate + phosphoenolpyruvate = 5-O-(1-carboxyvinyl)-3-phosphoshikimate + phosphate. It functions in the pathway metabolic intermediate biosynthesis; chorismate biosynthesis; chorismate from D-erythrose 4-phosphate and phosphoenolpyruvate: step 6/7. In terms of biological role, catalyzes the transfer of the enolpyruvyl moiety of phosphoenolpyruvate (PEP) to the 5-hydroxyl of shikimate-3-phosphate (S3P) to produce enolpyruvyl shikimate-3-phosphate and inorganic phosphate. The protein is 3-phosphoshikimate 1-carboxyvinyltransferase of Pelotomaculum thermopropionicum (strain DSM 13744 / JCM 10971 / SI).